The primary structure comprises 390 residues: Acetylornithine aminotransferase (390 aa).

Residues 103–104 (GT) and Phe129 each bind pyridoxal 5'-phosphate. Arg132 is a binding site for N(2)-acetyl-L-ornithine. 214–217 (DEVQ) lines the pyridoxal 5'-phosphate pocket. Lys243 carries the N6-(pyridoxal phosphate)lysine modification. Residue Ser271 participates in N(2)-acetyl-L-ornithine binding. Residue Thr272 coordinates pyridoxal 5'-phosphate. Lys304 participates in a covalent cross-link: Isoglutamyl lysine isopeptide (Lys-Gln) (interchain with Q-Cter in protein Pup).

It belongs to the class-III pyridoxal-phosphate-dependent aminotransferase family. ArgD subfamily. As to quaternary structure, homodimer. Requires pyridoxal 5'-phosphate as cofactor.

The protein resides in the cytoplasm. It catalyses the reaction N(2)-acetyl-L-ornithine + 2-oxoglutarate = N-acetyl-L-glutamate 5-semialdehyde + L-glutamate. It functions in the pathway amino-acid biosynthesis; L-arginine biosynthesis; N(2)-acetyl-L-ornithine from L-glutamate: step 4/4. In Mycolicibacterium smegmatis (strain ATCC 700084 / mc(2)155) (Mycobacterium smegmatis), this protein is Acetylornithine aminotransferase.